Here is a 384-residue protein sequence, read N- to C-terminus: N-acetyldiaminopimelate deacetylase (384 aa).

Aspartate 75 is an active-site residue. Glutamate 134 acts as the Proton acceptor in catalysis.

It belongs to the peptidase M20A family. N-acetyldiaminopimelate deacetylase subfamily.

It catalyses the reaction N-acetyl-(2S,6S)-2,6-diaminopimelate + H2O = (2S,6S)-2,6-diaminopimelate + acetate. Its pathway is amino-acid biosynthesis; L-lysine biosynthesis via DAP pathway; LL-2,6-diaminopimelate from (S)-tetrahydrodipicolinate (acetylase route): step 3/3. Functionally, catalyzes the conversion of N-acetyl-diaminopimelate to diaminopimelate and acetate. The polypeptide is N-acetyldiaminopimelate deacetylase (Lactobacillus helveticus (strain DPC 4571)).